We begin with the raw amino-acid sequence, 102 residues long: Small ribosomal subunit protein uS10 (102 aa).

The protein belongs to the universal ribosomal protein uS10 family. Part of the 30S ribosomal subunit.

Its function is as follows. Involved in the binding of tRNA to the ribosomes. This Methanococcus maripaludis (strain C7 / ATCC BAA-1331) protein is Small ribosomal subunit protein uS10.